We begin with the raw amino-acid sequence, 443 residues long: 26S proteasome regulatory subunit rpn501 (443 aa).

Position 209 is a phosphoserine (Ser-209). In terms of domain architecture, PCI spans 230–402 (DVCKYYRAVY…QVISFKKSQN (173 aa)).

The protein belongs to the proteasome subunit p55 family.

It is found in the nucleus. Acts as a regulatory subunit of the 26S proteasome which is involved in the ATP-dependent degradation of ubiquitinated proteins. Required for proper proteasome assembly. In Schizosaccharomyces pombe (strain 972 / ATCC 24843) (Fission yeast), this protein is 26S proteasome regulatory subunit rpn501 (rpn501).